The chain runs to 590 residues: Potassium-transporting ATPase potassium-binding subunit (590 aa).

A run of 10 helical transmembrane segments spans residues 11–31 (IFIAAVLLGAKPLGVYMAAVF), 64–84 (TAYCASMLIFSAATMLLTYLI), 136–156 (GLATHNFWSAAVGIALAIAFI), 178–198 (ILWVLLPICVVFALVLTSQGV), 273–293 (MLEMISIFLIPAGLTVTLGQM), 301–321 (WAVLGAMLILWFAGVATCYWA), 403–423 (AGLYGMLVFVIVAVFIAGLMV), 442–462 (AMLYLLIFPLIILGFSAVAVL), 511–531 (LGFAMFIGRFLMIVPMLALAG), and 552–572 (LFTVLLTSVIIVVGALTFLPA).

It belongs to the KdpA family. The system is composed of three essential subunits: KdpA, KdpB and KdpC.

Its subcellular location is the cell inner membrane. In terms of biological role, part of the high-affinity ATP-driven potassium transport (or Kdp) system, which catalyzes the hydrolysis of ATP coupled with the electrogenic transport of potassium into the cytoplasm. This subunit binds the periplasmic potassium ions and delivers the ions to the membrane domain of KdpB through an intramembrane tunnel. In Acidobacterium capsulatum (strain ATCC 51196 / DSM 11244 / BCRC 80197 / JCM 7670 / NBRC 15755 / NCIMB 13165 / 161), this protein is Potassium-transporting ATPase potassium-binding subunit.